Reading from the N-terminus, the 147-residue chain is FAD synthase (147 aa).

Residues T13–F14, H18–H21, D100, and F127 contribute to the ATP site.

This sequence belongs to the archaeal FAD synthase family. Homodimer. A divalent metal cation is required as a cofactor.

The enzyme catalyses FMN + ATP + H(+) = FAD + diphosphate. Its pathway is cofactor biosynthesis; FAD biosynthesis; FAD from FMN: step 1/1. Functionally, catalyzes the transfer of the AMP portion of ATP to flavin mononucleotide (FMN) to produce flavin adenine dinucleotide (FAD) coenzyme. In Korarchaeum cryptofilum (strain OPF8), this protein is FAD synthase.